The sequence spans 270 residues: NAD kinase (270 aa).

The Proton acceptor role is filled by D49. NAD(+)-binding positions include 49 to 50 (DG), R54, 126 to 127 (NE), R152, D154, 165 to 170 (TAYNKS), A189, and Q227.

This sequence belongs to the NAD kinase family. It depends on a divalent metal cation as a cofactor.

The protein resides in the cytoplasm. The catalysed reaction is NAD(+) + ATP = ADP + NADP(+) + H(+). Functionally, involved in the regulation of the intracellular balance of NAD and NADP, and is a key enzyme in the biosynthesis of NADP. Catalyzes specifically the phosphorylation on 2'-hydroxyl of the adenosine moiety of NAD to yield NADP. The protein is NAD kinase of Lactococcus lactis subsp. cremoris (strain SK11).